Here is a 1216-residue protein sequence, read N- to C-terminus: Phospholipase D B (1216 aa).

Over residues 1-14 (MNLSQEHAINQNLH) the composition is skewed to polar residues. The segment at 1 to 48 (MNLSQEHAINQNLHKNQKNEEKIEKKTINKDGRGQMNYDGEEGQGEKS) is disordered. Residues 17 to 33 (QKNEEKIEKKTINKDGR) show a composition bias toward basic and acidic residues. EF-hand domains lie at 196–231 (RNAD…MCRG) and 232–267 (TKKE…ISDI). Asp209, Asn211, Asp213, Lys215, and Glu220 together coordinate Ca(2+). One can recognise a PH domain in the interval 347 to 462 (EINMNGQLTK…WVNAIRFHSR (116 aa)). The PLD phosphodiesterase 1 domain occupies 585 to 612 (LSWSHHQKNAIIDQQIAFVGGIDICLMR). Catalysis depends on residues His590, Lys592, and Asp597. The segment at 732-844 (VSYGREKPTH…GLKSKNYKNN (113 aa)) is disordered. The span at 776 to 789 (NNSTNSENSENSYS) shows a compositional bias: low complexity. The segment covering 790–813 (EFDEEDEEGNQEEEDEDEFDEFEK) has biased composition (acidic residues). Positions 1036–1063 (EQIYVHSKVLIVDDRVAVIGSCNINDRS) constitute a PLD phosphodiesterase 2 domain. Active-site residues include His1041, Lys1043, and Asp1048.

This sequence belongs to the phospholipase D family.

It localises to the cytoplasmic vesicle. The protein localises to the cytoplasm. The protein resides in the cell cortex. The enzyme catalyses a 1,2-diacyl-sn-glycero-3-phosphocholine + H2O = a 1,2-diacyl-sn-glycero-3-phosphate + choline + H(+). With respect to regulation, inhibited by butan-1-ol. Its function is as follows. Plays a role in cell growth. Hydrolyzes membrane phospholipids, such as PtdCho (phosphatidylcholine), producing the free headgroup and PtdOH (phosphatidic acid; signaling molecule on its own). Involved in the inhibition of actin-based motility and endocytosis. Its inhibition causes complete collapse of F-actin organization. Plays an important role in cell migration by localizing along the anterior cell membrane. Overexpression leads to the inability to aggregate even at higher cell density. Also known as a negative regulator of quorum sensing. This is Phospholipase D B (pldB) from Dictyostelium discoideum (Social amoeba).